The sequence spans 352 residues: Thrombopoietin (352 aa).

Residues 1–23 (MELTELLLVVMLLLTARLDPCLP) form the signal peptide. Cystine bridges form between cysteine 28–cysteine 172 and cysteine 50–cysteine 106. Asparagine 185, asparagine 197, asparagine 206, asparagine 234, and asparagine 255 each carry an N-linked (GlcNAc...) asparagine glycan. Polar residues predominate over residues 233-245 (LNQTSRSLNQTPG). 2 disordered regions span residues 233-259 (LNQT…GTHG) and 292-352 (YSPS…SQEE). Residues 311–327 (PTSPTPQNPLQPPPPDP) show a composition bias toward pro residues. 2 N-linked (GlcNAc...) asparagine glycosylation sites follow: asparagine 332 and asparagine 347.

Belongs to the EPO/TPO family.

The protein resides in the secreted. Lineage-specific cytokine affecting the proliferation and maturation of megakaryocytes from their committed progenitor cells. It acts at a late stage of megakaryocyte development. It may be the major physiological regulator of circulating platelets. In Canis lupus familiaris (Dog), this protein is Thrombopoietin (THPO).